The sequence spans 870 residues: Leucine--tRNA ligase (870 aa).

The 'HIGH' region motif lies at 43–53 (PYPSGRIHMGH). The 'KMSKS' region signature appears at 630 to 634 (KMSKS). An ATP-binding site is contributed by Lys633.

Belongs to the class-I aminoacyl-tRNA synthetase family.

It is found in the cytoplasm. The catalysed reaction is tRNA(Leu) + L-leucine + ATP = L-leucyl-tRNA(Leu) + AMP + diphosphate. The polypeptide is Leucine--tRNA ligase (Parvibaculum lavamentivorans (strain DS-1 / DSM 13023 / NCIMB 13966)).